The following is a 622-amino-acid chain: Sodium-dependent serotonin transporter (622 aa).

The segment at 1–53 is disordered; the sequence is MDRSGSSDFAGAAATTGRSNPAPWSDDKESPNNEDDSNEDDGDHTTPAKVTDP. The Cytoplasmic segment spans residues 1–82; that stretch reads MDRSGSSDFA…TRETWGQKAE (82 aa). The span at 32-42 shows a compositional bias: acidic residues; it reads NNEDDSNEDDG. The next 3 membrane-spanning stretches (helical) occupy residues 83–103, 111–130, and 155–175; these read FLLA…FPYI, AFLV…LFYM, and GVGY…NTII. The Na(+) site is built by Gly-89, Ala-91, Val-92, and Asn-96. Topologically, residues 176–244 are extracellular; it reads GWAVYYLFAS…NGLDFMGPVK (69 aa). A disulfide bridge links Cys-195 with Cys-204. An N-linked (GlcNAc...) asparagine glycan is attached at Asn-211. The next 5 helical transmembrane spans lie at 245–263, 272–289, 325–342, 354–375, and 408–427; these read PTLA…FSLW, VVWV…ILLV, IFFS…LSSY, LITS…FSVL, and MSGS…TLGL. Ser-328, Asn-360, Leu-425, Asp-428, and Ser-429 together coordinate Na(+). 4 consecutive transmembrane segments (helical) span residues 455–473, 489–509, 530–549, and 568–586; these read LFVL…PTMT, GLAI…FYGV, ICWT…FSIM, and VGWA…YIIY. Over 587 to 622 the chain is Cytoplasmic; sequence KFFFASKGGCRQRLQESFQPEDNCGSVVPGQQGTSV.

The protein belongs to the sodium:neurotransmitter symporter (SNF) (TC 2.A.22) family. Expression is specific to cell bodies in the ventral ganglion of the embryonic and larval nervous system.

Its subcellular location is the cell membrane. Functionally, terminates the action of serotonin by its high affinity sodium-dependent reuptake into presynaptic terminals. This Drosophila melanogaster (Fruit fly) protein is Sodium-dependent serotonin transporter (SerT).